The sequence spans 872 residues: Telomerase component p95 (872 aa).

Disordered stretches follow at residues Asn55–Lys75 and Lys471–Ser492. Basic and acidic residues predominate over residues Lys474–Thr486.

Telomerase consist of two subunit, p80 and p95 that form a 1:1:1 complex with the 159 nt telomerase RNA.

The protein resides in the nucleus. It is found in the chromosome. It localises to the telomere. The catalysed reaction is DNA(n) + a 2'-deoxyribonucleoside 5'-triphosphate = DNA(n+1) + diphosphate. Ribonucleoprotein DNA polymerase that catalyzes the de novo synthesis of telomeric simple sequence repeats. Subunit p95 contains some or all of the template-independent primer DNA-binding site termed the anchor site. The sequence is that of Telomerase component p95 from Tetrahymena thermophila.